The chain runs to 393 residues: Pigment production hydroxylase (393 aa).

Its function is as follows. Involved in pigment production acting as a hydroxylase that transforms indole to indoxyl, resulting in the formation of indigo. This Rhodococcus erythropolis (Arthrobacter picolinophilus) protein is Pigment production hydroxylase.